Consider the following 1788-residue polypeptide: Protein Shroom3 (1788 aa).

Disordered regions lie at residues 1–25, 146–174, 225–263, 321–367, 382–401, 469–488, 498–548, 727–768, 793–821, 876–915, 1011–1067, 1086–1133, 1171–1263, 1303–1324, 1404–1467, and 1507–1538; these read MMQV…STSD, EVNS…HGRL, KAAG…ESSP, GAKS…KQEG, PDIS…PLRL, NIAS…QADH, TVHA…GNKL, EISP…VTPT, TAEQ…APLT, TGRR…SMNS, SRRH…SASN, SFKN…PETK, KRGK…SEAE, DTES…PPSL, VPAP…AKSQ, and ALKE…KRET. 2 stretches are compositionally biased toward polar residues: residues 147–161 and 230–240; these read VNSS…SRQP and HSTNTSSNAAQ. Composition is skewed to basic and acidic residues over residues 245–259 and 357–366; these read VHGD…ERSP and SVKEREKKQE. A compositionally biased stretch (basic and acidic residues) spans 476-488; it reads NKMDERSNRQADH. One can recognise an ASD1 domain in the interval 708–811; that stretch reads VKDAQCKVLE…SEPEKMNEVG (104 aa). The segment covering 793-808 has biased composition (basic and acidic residues); that stretch reads TAEQKKRSYSEPEKMN. Over residues 893–903 the composition is skewed to polar residues; the sequence is QSTYFSGSIMD. Residues 904–915 are compositionally biased toward low complexity; it reads NQSMTSTSSMNS. Composition is skewed to polar residues over residues 1055 to 1067, 1100 to 1124, and 1211 to 1263; these read EVGN…SASN, ENSS…SISG, and TSAQ…SEAE. Positions 1313–1323 are enriched in pro residues; sequence PPSPPPFPPPS. Polar residues predominate over residues 1433-1451; sequence SILQSSEGNFNPSDSQSTL. The region spanning 1467-1756 is the ASD2 domain; the sequence is QELAKEIVTK…QLRCLTESLP (290 aa). Residues 1529–1538 show a composition bias toward basic and acidic residues; sequence SEXKEEKRET. Residues 1653–1708 adopt a coiled-coil conformation; that stretch reads RLARVENALSSLGEDASAEERKTWNEKKKQLCGQHEDARELKENLDRREKLVMDFL.

The protein belongs to the shroom family. In terms of assembly, interacts with F-actin. Interacts with ROCK1. In terms of tissue distribution, expressed in epithelial cells of the cement gland.

The protein resides in the cell junction. It localises to the adherens junction. It is found in the cytoplasm. The protein localises to the cytoskeleton. Its subcellular location is the apical cell membrane. Controls cell shape changes in the neuroepithelium during neural tube closure. Induces apical constriction in epithelial cells by promoting the apical accumulation of F-actin and myosin II, and probably by bundling stress fibers. Induces apicobasal cell elongation by redistributing gamma-tubulin and directing the assembly of robust apicobasal microtubule arrays. This Xenopus laevis (African clawed frog) protein is Protein Shroom3 (shroom3).